We begin with the raw amino-acid sequence, 91 residues long: Acylphosphatase (91 aa).

The Acylphosphatase-like domain occupies 5–91 (RAHLRIYGRV…EGLEGFKVVG (87 aa)). Residues arginine 20 and asparagine 38 contribute to the active site.

The protein belongs to the acylphosphatase family.

The catalysed reaction is an acyl phosphate + H2O = a carboxylate + phosphate + H(+). The protein is Acylphosphatase (acyP) of Thermococcus kodakarensis (strain ATCC BAA-918 / JCM 12380 / KOD1) (Pyrococcus kodakaraensis (strain KOD1)).